The primary structure comprises 569 residues: Alpha-keto-acid decarboxylase (569 aa).

E57 lines the thiamine diphosphate pocket. Residues 392–474 (TAFYGMVEHR…VVVNNDGYTI (83 aa)) are thiamine pyrophosphate binding. Positions 442, 469, and 471 each coordinate Mg(2+).

This sequence belongs to the TPP enzyme family. It depends on a metal cation as a cofactor. Thiamine diphosphate serves as cofactor.

Decarboxylates branched-chain and aromatic alpha-keto acids to aldehydes. In Mycobacterium leprae (strain TN), this protein is Alpha-keto-acid decarboxylase (kdc).